The sequence spans 82 residues: Cytochrome b559 subunit alpha (82 aa).

The helical transmembrane segment at 22–36 threads the bilayer; that stretch reads VIHAVTLPSIFLAGY. His-24 lines the heme pocket.

It belongs to the PsbE/PsbF family. As to quaternary structure, heterodimer of an alpha subunit and a beta subunit. PSII is composed of 1 copy each of membrane proteins PsbA, PsbB, PsbC, PsbD, PsbE, PsbF, PsbH, PsbI, PsbJ, PsbK, PsbL, PsbM, PsbT, PsbX, PsbY, Psb30/Ycf12, peripheral proteins PsbO, CyanoQ (PsbQ), PsbU, PsbV and a large number of cofactors. It forms dimeric complexes. Heme b is required as a cofactor.

The protein localises to the cellular thylakoid membrane. In terms of biological role, this b-type cytochrome is tightly associated with the reaction center of photosystem II (PSII). PSII is a light-driven water:plastoquinone oxidoreductase that uses light energy to abstract electrons from H(2)O, generating O(2) and a proton gradient subsequently used for ATP formation. It consists of a core antenna complex that captures photons, and an electron transfer chain that converts photonic excitation into a charge separation. The polypeptide is Cytochrome b559 subunit alpha (Prochlorococcus marinus (strain MIT 9303)).